Here is a 415-residue protein sequence, read N- to C-terminus: Adipocyte plasma membrane-associated protein (415 aa).

The interval 1–29 is disordered; that stretch reads MSEADGLRQRRPLRPQVVTDDGQVPEVKE. At serine 2 the chain carries N-acetylserine. The Cytoplasmic segment spans residues 2–39; the sequence is SEADGLRQRRPLRPQVVTDDGQVPEVKEGSSFSGRVFR. Threonine 19 is subject to Phosphothreonine. Residues 40–60 form a helical; Signal-anchor for type II membrane protein membrane-spanning segment; the sequence is MTFLMLAVSLAIPLLGAMMLL. The Extracellular segment spans residues 61–415; the sequence is ESPIDPQSFS…FICRLSLQSI (355 aa). Asparagine 159 carries an N-linked (GlcNAc...) asparagine glycan.

The protein belongs to the strictosidine synthase family. Glycosylated in vitro. As to expression, strongly expressed in adipose tissue. Highly expressed in liver, heart, and kidney. Expressed at intermediate level in brain and lung. Weakly expressed in spleen, skeletal muscle and testis.

Its subcellular location is the membrane. Exhibits strong arylesterase activity with beta-naphthyl acetate and phenyl acetate. May play a role in adipocyte differentiation. In Mus musculus (Mouse), this protein is Adipocyte plasma membrane-associated protein (Apmap).